The chain runs to 218 residues: N-(5'-phosphoribosyl)anthranilate isomerase (218 aa).

This sequence belongs to the TrpF family.

The enzyme catalyses N-(5-phospho-beta-D-ribosyl)anthranilate = 1-(2-carboxyphenylamino)-1-deoxy-D-ribulose 5-phosphate. The protein operates within amino-acid biosynthesis; L-tryptophan biosynthesis; L-tryptophan from chorismate: step 3/5. The polypeptide is N-(5'-phosphoribosyl)anthranilate isomerase (Chelativorans sp. (strain BNC1)).